A 417-amino-acid polypeptide reads, in one-letter code: Gamma-glutamyl phosphate reductase (417 aa).

It belongs to the gamma-glutamyl phosphate reductase family.

Its subcellular location is the cytoplasm. It catalyses the reaction L-glutamate 5-semialdehyde + phosphate + NADP(+) = L-glutamyl 5-phosphate + NADPH + H(+). It functions in the pathway amino-acid biosynthesis; L-proline biosynthesis; L-glutamate 5-semialdehyde from L-glutamate: step 2/2. In terms of biological role, catalyzes the NADPH-dependent reduction of L-glutamate 5-phosphate into L-glutamate 5-semialdehyde and phosphate. The product spontaneously undergoes cyclization to form 1-pyrroline-5-carboxylate. The polypeptide is Gamma-glutamyl phosphate reductase (Bacteroides thetaiotaomicron (strain ATCC 29148 / DSM 2079 / JCM 5827 / CCUG 10774 / NCTC 10582 / VPI-5482 / E50)).